Reading from the N-terminus, the 132-residue chain is Small ribosomal subunit protein uS11 (132 aa).

This sequence belongs to the universal ribosomal protein uS11 family. As to quaternary structure, part of the 30S ribosomal subunit. Interacts with proteins S7 and S18. Binds to IF-3.

Located on the platform of the 30S subunit, it bridges several disparate RNA helices of the 16S rRNA. Forms part of the Shine-Dalgarno cleft in the 70S ribosome. The chain is Small ribosomal subunit protein uS11 from Clostridium kluyveri (strain NBRC 12016).